The sequence spans 421 residues: tRNA (guanine(37)-N(1))-methyltransferase (421 aa).

S-adenosyl-L-methionine-binding positions include Arg198, 242–243, 270–271, and Asn293; these read DL and DA.

It belongs to the class I-like SAM-binding methyltransferase superfamily. TRM5/TYW2 family. Monomer.

The protein resides in the mitochondrion matrix. It is found in the nucleus. Its subcellular location is the cytoplasm. The enzyme catalyses guanosine(37) in tRNA + S-adenosyl-L-methionine = N(1)-methylguanosine(37) in tRNA + S-adenosyl-L-homocysteine + H(+). Its function is as follows. Specifically methylates the N1 position of guanosine-37 in various cytoplasmic and mitochondrial tRNAs. Methylation is not dependent on the nature of the nucleoside 5' of the target nucleoside. This is the first step in the biosynthesis of wybutosine (yW), a modified base adjacent to the anticodon of tRNAs and required for accurate decoding. This chain is tRNA (guanine(37)-N(1))-methyltransferase, found in Paramecium tetraurelia.